The chain runs to 103 residues: Thioredoxin-1 (103 aa).

One can recognise a Thioredoxin domain in the interval 2 to 103; sequence VKQVSDSSEF…KLEASIKANL (102 aa). Catalysis depends on nucleophile residues cysteine 30 and cysteine 33. Cysteines 30 and 33 form a disulfide.

The protein belongs to the thioredoxin family.

Participates in various redox reactions through the reversible oxidation of its active center dithiol to a disulfide and catalyzes dithiol-disulfide exchange reactions. The chain is Thioredoxin-1 (trx1) from Schizosaccharomyces pombe (strain 972 / ATCC 24843) (Fission yeast).